We begin with the raw amino-acid sequence, 562 residues long: Protein wntless (562 aa).

Residues 1–13 (MSGTILENLSGRK) are Cytoplasmic-facing. Residues 14–34 (LSILVGSLLLCQVLCFLLGGL) form a helical membrane-spanning segment. At 35–239 (YAPVPAGHTN…AIHQNGGFTH (205 aa)) the chain is on the lumenal side. N58 is a glycosylation site (N-linked (GlcNAc...) asparagine). The chain crosses the membrane as a helical span at residues 240-260 (VWLMLKTLLFPFVVGIMVWFW). Topologically, residues 261–270 (RRVHLLQRSP) are cytoplasmic. The chain crosses the membrane as a helical span at residues 271-291 (ALLEYMLLYLGGALTFLNLPL). The Lumenal portion of the chain corresponds to 292-311 (EYLSLTIEMPYMLLLSDIRQ). The helical transmembrane segment at 312–332 (GIFYAMLLSFWLVFAGEHMLI) threads the bilayer. Topologically, residues 333–344 (QDSHNKSTIRSR) are cytoplasmic. A helical membrane pass occupies residues 345–365 (YWKHLSAVVVGCISLFVFDIS). At 366 to 386 (ERGVQLRNPFYSIWTTPLGAK) the chain is on the lumenal side. A helical transmembrane segment spans residues 387-407 (VAMSFILLAGVSAAVYFLFLC). Residues 408–441 (YMISKVFKNIGDKRTSLPSMSQARRLHYEGLIYR) are Cytoplasmic-facing. The helical transmembrane segment at 442 to 462 (FKFLMLATLLCAALTVTGFIM) threads the bilayer. The Lumenal segment spans residues 463 to 482 (GQMAEGQWKWNDDVEIQLTS). Residues 483–503 (AFLTGVYGMWNIYIFALLILY) traverse the membrane as a helical segment. The Cytoplasmic portion of the chain corresponds to 504 to 562 (APSHKQWPTMHHSDETTQSNENIVASAASEEIEFSNLPSDSNPSEISSLTSFTRKVAFE). Residues 538–562 (SNLPSDSNPSEISSLTSFTRKVAFE) are disordered. Residues 539–556 (NLPSDSNPSEISSLTSFT) show a composition bias toward polar residues.

This sequence belongs to the wntless family. As to quaternary structure, interacts with wg; in the Golgi. Interacts with Vps35, a component of the retromer complex; wls stability is regulated by Vps35.

It localises to the presynaptic cell membrane. Its subcellular location is the postsynaptic cell membrane. It is found in the cell membrane. The protein localises to the endoplasmic reticulum membrane. The protein resides in the endosome membrane. It localises to the golgi apparatus membrane. Its function is as follows. A segment polarity gene required for wingless (wg)-dependent patterning processes, acting in both wg-sending cells and wg-target cells. In non-neuronal cells wls directs wg secretion. The wls traffic loop encompasses the Golgi, the cell surface, an endocytic compartment and a retrograde route leading back to the Golgi, and involves clathrin-mediated endocytosis and the retromer complex (a conserved protein complex consisting of Vps35 and Vps26). In neuronal cells (the larval motorneuron NMJ), the wg signal moves across the synapse via the release of wls-containing exosome-like vesicles. Postsynaptic wls is required for the trafficking of fz2 through the fz2-interacting protein Grip. The polypeptide is Protein wntless (Drosophila persimilis (Fruit fly)).